The primary structure comprises 883 residues: MGEGALAPGLQLLLRACEQGDTDTARRLLEPGADPVAGPEAGAEPAGPEAVRAAEAGAPVPVDCSDEAGNSALQLAAAGGHEPLVRFLLRRGASVNSRNHYGWSALMQAARCGHVSVAHLLLDHGADVNAQNRLGASVLTVASRGGHLGVVKLLLEAGAIVDHHTPSGESPATGGSGDELLGITALMAAVQHGHEAVVRLLMEWGADPNHTARTVGWSPLMLAALLGKLNVAQQLVEKGANPDHLSVLEKTAFEVALDRKYRDLAEYLDPLTTVRPKTDEEKRRPDIFYALKMGNFQLVKEIADEDPNHVNLVNGDGATPLMLAAVTGHLPLVQLLVEKHADMDKQDSVHGWTALMQATYHGNKEIVKYLLNQGADVALRAKNGYTAFDLVMLLNDPDTELVRLLASVCMQVNKDRGRPSHRPPLPHSKARQPWSIPVLPDDKGGLKSWWSRMSNRFRKLKLMQTLPRGLAANQPLPFSDEPELALDSTMRAPPQDRTSHLGPPEAAHATKDSGPGNPRREKGDVLLTTMLRNGAPFPRLPSDKLKAVIPPFLPPSSFELWSSDRSHTCHNGKADPTKTALPPRASRAHPVGCVGTDGATSRPVKFPSISRSPASPASSGSFNHSPHSSGGASGIGGMSRLGGELHSRSGGSVDSVLSQIAAQRKKAAGLCEQKPRQQSSPVGPATSSSPPELPASLPSSGSGSSSGPSSSKKLDPSKRPPSGTSATSKSTSPTLTPSPSPKGHTAESSVSSSSSHRQSKSSGGSSSGTITDEDELTGILKKLSLEKYQPIFEEQEVDMEAFLTLTDGDLQELGIKTDGSRQQILAAISELNAGKGRERQILQETIHNFHSSFESSASNTRAPGNGPSMAGWTRPEETVSSRR.

10 ANK repeats span residues 8–37 (PGLQ…DPVA), 68–97 (AGNS…SVNS), 101–130 (YGWS…DVNA), 134–163 (LGAS…IVDH), 181–210 (LGIT…DPNH), 215–244 (VGWS…NPDH), 282–312 (KRRP…HVNL), 316–345 (DGAT…DMDK), 350–379 (HGWT…DVAL), and 383–414 (NGYT…QVNK). The segment at 30–50 (EPGADPVAGPEAGAEPAGPEA) is disordered. 4 disordered regions span residues 414-439 (KDRG…IPVL), 490-522 (MRAP…RREK), 566-773 (SHTC…ITDE), and 852-883 (SFES…SSRR). Residues 566 to 576 (SHTCHNGKADP) show a composition bias toward basic and acidic residues. The segment covering 607 to 630 (PSISRSPASPASSGSFNHSPHSSG) has biased composition (low complexity). The span at 631–640 (GASGIGGMSR) shows a compositional bias: gly residues. The residue at position 649 (Ser-649) is a Phosphoserine. The span at 649–661 (SGGSVDSVLSQIA) shows a compositional bias: polar residues. Composition is skewed to low complexity over residues 687–711 (SSSP…PSSS) and 720–737 (PPSG…TLTP). Ser-732 and Ser-740 each carry phosphoserine. Residues 748-768 (SSVSSSSSHRQSKSSGGSSSG) are compositionally biased toward low complexity. Residues 771–834 (TDEDELTGIL…LAAISELNAG (64 aa)) enclose the SAM domain. Residues 852-862 (SFESSASNTRA) show a composition bias toward polar residues. The span at 874-883 (RPEETVSSRR) shows a compositional bias: basic and acidic residues.

Homooligomer. Interacts with NEK8. Central component of a complex containing at least ANKS6, INVS, NEK8 and NPHP3. ANKS6 may organize complex assembly by linking INVS and NPHP3 to NEK8 and INVS may target the complex to the proximal ciliary axoneme. Interacts (via SAM domain) with BICC1 (via KH domains) in an RNA-dependent manner. Interacts (via SAM domain) with ANKS3 (via SAM domain). In terms of processing, hydroxylated at Asn-129, most probably by HIF1AN. This hydroxylation results in decreased NEK8-binding. In terms of tissue distribution, expressed in kidney (at protein level).

It localises to the cell projection. It is found in the cilium. Its subcellular location is the cytoplasm. In terms of biological role, required for renal function. The polypeptide is Ankyrin repeat and SAM domain-containing protein 6 (Anks6) (Mus musculus (Mouse)).